A 40-amino-acid polypeptide reads, in one-letter code: Trypsin inhibitor (40 aa).

In terms of assembly, monomer.

The catalysed reaction is Preferential cleavage: Arg-|-Xaa, Lys-|-Xaa.. Its function is as follows. Inhibits trypsin but not chymotrypsin, papain or porcine pancreatic alpha-amylase. Has insecticidal activity against A.aegypti. Functions by inhibiting the A.aegypti midgut proteases to reduce the survival of larva and adults. This Cassia leiandra (Marimari) protein is Trypsin inhibitor.